The sequence spans 503 residues: ATP synthase subunit alpha (503 aa).

169 to 176 (GDRGTGKT) serves as a coordination point for ATP.

The protein belongs to the ATPase alpha/beta chains family. In terms of assembly, F-type ATPases have 2 components, CF(1) - the catalytic core - and CF(0) - the membrane proton channel. CF(1) has five subunits: alpha(3), beta(3), gamma(1), delta(1), epsilon(1). CF(0) has three main subunits: a(1), b(2) and c(9-12). The alpha and beta chains form an alternating ring which encloses part of the gamma chain. CF(1) is attached to CF(0) by a central stalk formed by the gamma and epsilon chains, while a peripheral stalk is formed by the delta and b chains.

The protein resides in the cell inner membrane. The enzyme catalyses ATP + H2O + 4 H(+)(in) = ADP + phosphate + 5 H(+)(out). In terms of biological role, produces ATP from ADP in the presence of a proton gradient across the membrane. The alpha chain is a regulatory subunit. This Leptospira interrogans serogroup Icterohaemorrhagiae serovar copenhageni (strain Fiocruz L1-130) protein is ATP synthase subunit alpha.